We begin with the raw amino-acid sequence, 619 residues long: Cationic amino acid transporter 3 (619 aa).

The Cytoplasmic segment spans residues 1–36 (MLWQALRRFGQKLVRRRLLELGMGETRLARCLSTLD). The helical transmembrane segment at 37–57 (LVALGVGSTLGAGVYVLAGEV) threads the bilayer. Residues 58 to 61 (AKEK) are Extracellular-facing. Residues 62-82 (AGPSIVICFLVAALSSVLAGL) traverse the membrane as a helical segment. Residues 83 to 107 (CYAEFGARVPGSGSAYLYSYVTVGE) are Cytoplasmic-facing. Residues 108-128 (LWAFTTGWNLILSYVIGTASV) traverse the membrane as a helical segment. The Extracellular portion of the chain corresponds to 129 to 162 (ARAWSSAFDNLIGNHISQTLKGTILLNMPHVLAE). The helical transmembrane segment at 163-183 (YPDFFALALVLLLTGLLVLGA) threads the bilayer. At 184–191 (NESGLVTK) the chain is on the cytoplasmic side. The helical transmembrane segment at 192–212 (VFTGMNLLVLGFVIISGFIKG) threads the bilayer. Over 213-244 (ELRNWKLTKEDYCLTMSESNGTCSLDSMGSGG) the chain is Extracellular. N-linked (GlcNAc...) asparagine glycosylation occurs at asparagine 232. Residues 245–265 (FMPFGLEGILRGAATCFYAFV) traverse the membrane as a helical segment. At 266-285 (GFDCIATTGEEAQNPQRSIP) the chain is on the cytoplasmic side. The helical transmembrane segment at 286 to 306 (MGIVISLSICFLAYFGVSSAL) threads the bilayer. The Extracellular segment spans residues 307–335 (TLMMPYYKLQPESPLPEAFTYVGWEPARY). The helical transmembrane segment at 336-356 (LVAIGSLCALSTSLLGSMFPM) threads the bilayer. The Cytoplasmic segment spans residues 357-382 (PRVIYAMAEDGLLFRVLARVHNGTHT). Residues 383-403 (PIVATVVSGVIAAFMAFLFEL) traverse the membrane as a helical segment. The Extracellular segment spans residues 404–406 (TDL). A helical transmembrane segment spans residues 407 to 427 (VDLMSIGTLLAYSLVSICVLI). Residues 428–475 (LRYQPDQEMKNGEEEVELQEERTLEAEKLTVQALFCQVDSIPTLLSGR) lie on the Cytoplasmic side of the membrane. Residues 476–496 (IVYVCSSLLAVLLTVLCLVLT) form a helical membrane-spanning segment. Residues 497-507 (WWTTPLHSGDP) lie on the Extracellular side of the membrane. The chain crosses the membrane as a helical span at residues 508-528 (VWVTVVVLILGLILGISGVIW). Residues 529–540 (RQPQNRTPLHFK) are Cytoplasmic-facing. A helical membrane pass occupies residues 541-561 (VPVVPLLPLVSIFVNVYLMMQ). At 562–569 (MTADTWAR) the chain is on the extracellular side. The chain crosses the membrane as a helical span at residues 570-590 (FGVWMLIGFAIYFGYGIQHSV). Residues 591–619 (EEVKNHQTLPKTRPQTIDLDLTTSCVHSI) are Cytoplasmic-facing. Threonine 606 carries the post-translational modification Phosphothreonine. Phosphoserine is present on serine 618.

Belongs to the amino acid-polyamine-organocation (APC) superfamily. Cationic amino acid transporter (CAT) (TC 2.A.3.3) family. Post-translationally, N-glycosylated. As to expression, highly expressed in brain.

Its subcellular location is the cell membrane. It catalyses the reaction L-arginine(in) = L-arginine(out). The enzyme catalyses L-lysine(in) = L-lysine(out). The catalysed reaction is L-ornithine(in) = L-ornithine(out). With respect to regulation, inhibited by high potassium ions-induced membrane depolarization. Uniporter that mediates the uptake of cationic L-amino acids such as L-arginine, L-lysine and L-ornithine. The transport is sodium ions- and pH-independent, moderately trans-stimulated and is mediated by passive diffusion. The protein is Cationic amino acid transporter 3 of Rattus norvegicus (Rat).